The chain runs to 360 residues: MLLLLAEYLQQFYKGFGVFQYLTLRGILSVLTALSLSLWLGPWMIRTLQIRQIGQAVRNDGPQSHLSKKGTPTMGGALILTAIAISTLLWADLSNRYVWVVLVVTLLFGAIGWVDDYRKVIEKNSRGLPSRWKYFWQSVFGIGAAVFLYMTAETPIETTLIVPMLKSVEIQLGIFFVVLTYFVIVGSSNAVNLTDGLDGLAIMPTVMVAGALGIFCYLSGNVKFAEYLLIPNVPGAGELIVFCAALVGAGLGFLWFNTYPAQVFMGDVGALALGAALGTIAVIVRQEIVLFIMGGVFVMETLSVMIQVASFKLTGRRVFRMAPIHHHFELKGWPEPRVIVRFWIITVILVLIGLATLKLR.

A run of 10 helical transmembrane segments spans residues 25 to 45 (RGILSVLTALSLSLWLGPWMI), 73 to 93 (TMGGALILTAIAISTLLWADL), 97 to 117 (YVWVVLVVTLLFGAIGWVDDY), 142 to 162 (IGAAVFLYMTAETPIETTLIV), 167 to 187 (SVEIQLGIFFVVLTYFVIVGS), 199 to 219 (GLAIMPTVMVAGALGIFCYLS), 236 to 256 (AGELIVFCAALVGAGLGFLWF), 263 to 283 (VFMGDVGALALGAALGTIAVI), 288 to 308 (IVLFIMGGVFVMETLSVMIQV), and 338 to 358 (VIVRFWIITVILVLIGLATLK).

The protein belongs to the glycosyltransferase 4 family. MraY subfamily. Requires Mg(2+) as cofactor.

Its subcellular location is the cell inner membrane. It carries out the reaction UDP-N-acetyl-alpha-D-muramoyl-L-alanyl-gamma-D-glutamyl-meso-2,6-diaminopimeloyl-D-alanyl-D-alanine + di-trans,octa-cis-undecaprenyl phosphate = di-trans,octa-cis-undecaprenyl diphospho-N-acetyl-alpha-D-muramoyl-L-alanyl-D-glutamyl-meso-2,6-diaminopimeloyl-D-alanyl-D-alanine + UMP. It participates in cell wall biogenesis; peptidoglycan biosynthesis. Its function is as follows. Catalyzes the initial step of the lipid cycle reactions in the biosynthesis of the cell wall peptidoglycan: transfers peptidoglycan precursor phospho-MurNAc-pentapeptide from UDP-MurNAc-pentapeptide onto the lipid carrier undecaprenyl phosphate, yielding undecaprenyl-pyrophosphoryl-MurNAc-pentapeptide, known as lipid I. The polypeptide is Phospho-N-acetylmuramoyl-pentapeptide-transferase (Pseudomonas aeruginosa (strain LESB58)).